A 309-amino-acid chain; its full sequence is Protein FdhE (309 aa).

This sequence belongs to the FdhE family.

The protein resides in the cytoplasm. Functionally, necessary for formate dehydrogenase activity. In Escherichia coli (strain K12 / MC4100 / BW2952), this protein is Protein FdhE.